Reading from the N-terminus, the 124-residue chain is Small ribosomal subunit protein uS12 (124 aa).

The tract at residues 9-28 (RTERQTLSRKTKSPALRSCP) is disordered. Residue aspartate 89 is modified to 3-methylthioaspartic acid. Residues 104–124 (TAGVKDRRQSRSKYGAKAPKE) form a disordered region.

Belongs to the universal ribosomal protein uS12 family. In terms of assembly, part of the 30S ribosomal subunit. Contacts proteins S8 and S17. May interact with IF1 in the 30S initiation complex.

Its function is as follows. With S4 and S5 plays an important role in translational accuracy. Interacts with and stabilizes bases of the 16S rRNA that are involved in tRNA selection in the A site and with the mRNA backbone. Located at the interface of the 30S and 50S subunits, it traverses the body of the 30S subunit contacting proteins on the other side and probably holding the rRNA structure together. The combined cluster of proteins S8, S12 and S17 appears to hold together the shoulder and platform of the 30S subunit. This Synechococcus sp. (strain RCC307) protein is Small ribosomal subunit protein uS12.